Reading from the N-terminus, the 178-residue chain is Peptide deformylase (178 aa).

Residues C96 and H138 each contribute to the Fe cation site. E139 is a catalytic residue. H142 contributes to the Fe cation binding site.

It belongs to the polypeptide deformylase family. It depends on Fe(2+) as a cofactor.

The enzyme catalyses N-terminal N-formyl-L-methionyl-[peptide] + H2O = N-terminal L-methionyl-[peptide] + formate. Its function is as follows. Removes the formyl group from the N-terminal Met of newly synthesized proteins. Requires at least a dipeptide for an efficient rate of reaction. N-terminal L-methionine is a prerequisite for activity but the enzyme has broad specificity at other positions. This is Peptide deformylase from Bartonella tribocorum (strain CIP 105476 / IBS 506).